Consider the following 405-residue polypeptide: Tyrosine--tRNA ligase (405 aa).

The 'HIGH' region motif lies at 48–57; sequence PSRPDLHLGH. The 'KMSKS' region signature appears at 232–236; sequence KMSKS. Residue Lys-235 participates in ATP binding. Residues 339–400 enclose the S4 RNA-binding domain; it reads LPLVDLLTTL…AGKRKFFRIA (62 aa).

The protein belongs to the class-I aminoacyl-tRNA synthetase family. TyrS type 2 subfamily. Homodimer.

The protein localises to the cytoplasm. The catalysed reaction is tRNA(Tyr) + L-tyrosine + ATP = L-tyrosyl-tRNA(Tyr) + AMP + diphosphate + H(+). Catalyzes the attachment of tyrosine to tRNA(Tyr) in a two-step reaction: tyrosine is first activated by ATP to form Tyr-AMP and then transferred to the acceptor end of tRNA(Tyr). The sequence is that of Tyrosine--tRNA ligase from Chlorobium luteolum (strain DSM 273 / BCRC 81028 / 2530) (Pelodictyon luteolum).